We begin with the raw amino-acid sequence, 465 residues long: Cysteine--tRNA ligase (465 aa).

C30 provides a ligand contact to Zn(2+). A 'HIGH' region motif is present at residues 32–42 (ITVYDYCHVGH). 3 residues coordinate Zn(2+): C214, H239, and E243. A 'KMSKS' region motif is present at residues 271–275 (KMSKS). Position 274 (K274) interacts with ATP.

This sequence belongs to the class-I aminoacyl-tRNA synthetase family. As to quaternary structure, monomer. Zn(2+) is required as a cofactor.

It localises to the cytoplasm. The catalysed reaction is tRNA(Cys) + L-cysteine + ATP = L-cysteinyl-tRNA(Cys) + AMP + diphosphate. This is Cysteine--tRNA ligase from Burkholderia ambifaria (strain MC40-6).